Consider the following 248-residue polypeptide: ATP synthase subunit a (248 aa).

The next 6 membrane-spanning stretches (helical) occupy residues 34–54 (TNVTLWMALAVAAIALLLVAG), 91–111 (YFPYIFTLFMFILVANFLGLI), 121–141 (IAVTAVLALAVFITVTVIGFV), 147–167 (FLSLFWVASAPLALRPILAVI), 197–217 (FAGFAQVAAVAPIAIIGVMAI), and 220–240 (LEVLVSAIQAYVFTILTCVYL).

Belongs to the ATPase A chain family. As to quaternary structure, F-type ATPases have 2 components, CF(1) - the catalytic core - and CF(0) - the membrane proton channel. CF(1) has five subunits: alpha(3), beta(3), gamma(1), delta(1), epsilon(1). CF(0) has four main subunits: a, b, b' and c.

The protein localises to the cell inner membrane. In terms of biological role, key component of the proton channel; it plays a direct role in the translocation of protons across the membrane. In Dinoroseobacter shibae (strain DSM 16493 / NCIMB 14021 / DFL 12), this protein is ATP synthase subunit a.